A 252-amino-acid polypeptide reads, in one-letter code: 5-oxoprolinase subunit A (252 aa).

It belongs to the LamB/PxpA family. In terms of assembly, forms a complex composed of PxpA, PxpB and PxpC.

It carries out the reaction 5-oxo-L-proline + ATP + 2 H2O = L-glutamate + ADP + phosphate + H(+). Its function is as follows. Catalyzes the cleavage of 5-oxoproline to form L-glutamate coupled to the hydrolysis of ATP to ADP and inorganic phosphate. In Mycolicibacterium paratuberculosis (strain ATCC BAA-968 / K-10) (Mycobacterium paratuberculosis), this protein is 5-oxoprolinase subunit A.